The following is a 447-amino-acid chain: Glutamate-1-semialdehyde 2,1-aminomutase (447 aa).

An N6-(pyridoxal phosphate)lysine modification is found at Lys-272.

It belongs to the class-III pyridoxal-phosphate-dependent aminotransferase family. HemL subfamily. In terms of assembly, homodimer. The cofactor is pyridoxal 5'-phosphate.

Its subcellular location is the cytoplasm. The catalysed reaction is (S)-4-amino-5-oxopentanoate = 5-aminolevulinate. It functions in the pathway porphyrin-containing compound metabolism; protoporphyrin-IX biosynthesis; 5-aminolevulinate from L-glutamyl-tRNA(Glu): step 2/2. This is Glutamate-1-semialdehyde 2,1-aminomutase from Leifsonia xyli subsp. xyli (strain CTCB07).